The chain runs to 356 residues: UDP-3-O-acylglucosamine N-acyltransferase (356 aa).

Histidine 242 functions as the Proton acceptor in the catalytic mechanism.

The protein belongs to the transferase hexapeptide repeat family. LpxD subfamily. In terms of assembly, homotrimer.

The catalysed reaction is a UDP-3-O-[(3R)-3-hydroxyacyl]-alpha-D-glucosamine + a (3R)-hydroxyacyl-[ACP] = a UDP-2-N,3-O-bis[(3R)-3-hydroxyacyl]-alpha-D-glucosamine + holo-[ACP] + H(+). It participates in bacterial outer membrane biogenesis; LPS lipid A biosynthesis. In terms of biological role, catalyzes the N-acylation of UDP-3-O-acylglucosamine using 3-hydroxyacyl-ACP as the acyl donor. Is involved in the biosynthesis of lipid A, a phosphorylated glycolipid that anchors the lipopolysaccharide to the outer membrane of the cell. The protein is UDP-3-O-acylglucosamine N-acyltransferase of Acinetobacter baumannii (strain ACICU).